Here is a 218-residue protein sequence, read N- to C-terminus: Oxaloacetate decarboxylase, mitochondrial (218 aa).

The transit peptide at 1-18 (MNKFWETGRKIVAVGRNY) directs the protein to the mitochondrion. Positions 63, 65, and 94 each coordinate Mg(2+).

The protein belongs to the FAH family. In terms of assembly, homodimer. Requires Mg(2+) as cofactor. It depends on Mn(2+) as a cofactor.

The protein resides in the mitochondrion. The protein localises to the cytoplasm. Its subcellular location is the cytosol. The catalysed reaction is a 3-acylpyruvate + H2O = a carboxylate + pyruvate + H(+). It carries out the reaction acetylpyruvate + H2O = acetate + pyruvate + H(+). It catalyses the reaction 3-fumarylpyruvate + H2O = fumarate + pyruvate + H(+). The enzyme catalyses oxaloacetate + H(+) = pyruvate + CO2. Functionally, mitochondrial protein that acts as an oxaloacetate decarboxylase (ODx), catalyzing the decarboxylation of oxaloacetate (OAA) to pyruvate and CO(2), and as such is likely a regulatory enzyme in the TCA cycle. Also displays acylpyruvase activity, being able to hydrolyze acetylpyruvate and fumarylpyruvate in vitro. This Dictyostelium discoideum (Social amoeba) protein is Oxaloacetate decarboxylase, mitochondrial (fahd1).